Consider the following 192-residue polypeptide: Ribose 1,5-bisphosphate phosphokinase PhnN (192 aa).

15–22 (GPSGAGKD) is an ATP binding site.

The protein belongs to the ribose 1,5-bisphosphokinase family.

It carries out the reaction alpha-D-ribose 1,5-bisphosphate + ATP = 5-phospho-alpha-D-ribose 1-diphosphate + ADP. Its pathway is metabolic intermediate biosynthesis; 5-phospho-alpha-D-ribose 1-diphosphate biosynthesis; 5-phospho-alpha-D-ribose 1-diphosphate from D-ribose 5-phosphate (route II): step 3/3. Functionally, catalyzes the phosphorylation of ribose 1,5-bisphosphate to 5-phospho-D-ribosyl alpha-1-diphosphate (PRPP). This Brucella abortus biovar 1 (strain 9-941) protein is Ribose 1,5-bisphosphate phosphokinase PhnN.